The chain runs to 122 residues: Urease subunit beta (122 aa).

This sequence belongs to the urease beta subunit family. Heterotrimer of UreA (gamma), UreB (beta) and UreC (alpha) subunits. Three heterotrimers associate to form the active enzyme.

The protein localises to the cytoplasm. The catalysed reaction is urea + 2 H2O + H(+) = hydrogencarbonate + 2 NH4(+). The protein operates within nitrogen metabolism; urea degradation; CO(2) and NH(3) from urea (urease route): step 1/1. This is Urease subunit beta from Acetivibrio thermocellus (strain ATCC 27405 / DSM 1237 / JCM 9322 / NBRC 103400 / NCIMB 10682 / NRRL B-4536 / VPI 7372) (Clostridium thermocellum).